The sequence spans 666 residues: Calpain-10 (666 aa).

The Calpain catalytic domain occupies 13 to 321 (LFRDAAFPAS…FDEVTIGYPV (309 aa)). Residues Cys73, His238, and Asn263 contribute to the active site. 2 domain III regions span residues 322-488 (TEAG…ISLS) and 507-648 (EWET…IHSQ).

This sequence belongs to the peptidase C2 family.

Its function is as follows. Calcium-regulated non-lysosomal thiol-protease which catalyzes limited proteolysis of substrates involved in cytoskeletal remodeling and signal transduction. May play a role in insulin-stimulated glucose uptake. This chain is Calpain-10 (Capn10), found in Mus musculus (Mouse).